The chain runs to 314 residues: Olfactory receptor 4Q2 (314 aa).

Residues 1–26 lie on the Extracellular side of the membrane; that stretch reads MDKNQTEVMREFFLSGFSQTPSIEAG. A glycan (N-linked (GlcNAc...) asparagine) is linked at Asn4. A helical transmembrane segment spans residues 27 to 47; that stretch reads LFVLFLFFYMSIWVGNVLIMV. At 48 to 61 the chain is on the cytoplasmic side; sequence TVASDKYLNSSPMY. A helical membrane pass occupies residues 62–84; sequence FLLGNLSFLDLCYSTVTTPKLLA. Residues 85-98 are Extracellular-facing; that stretch reads DFFNHEKLISYDQC. A disulfide bridge links Cys98 with Cys181. A helical transmembrane segment spans residues 99–119; sequence IVQLFFLHFVGAAEMFLLTVM. Residues 120-142 lie on the Cytoplasmic side of the membrane; sequence AYDRYVAICRPLHYTTVMSRGLC. A helical transmembrane segment spans residues 143–163; the sequence is CVLVAASWMGGFVHSTVQTIL. Over 164-196 the chain is Extracellular; that stretch reads TVHLPFCGPNQVENTFFCDVPPVIKLACADTFV. Residues 197–217 form a helical membrane-spanning segment; that stretch reads IELLMVSNSGLISTISFVVLI. Over 218–236 the chain is Cytoplasmic; that stretch reads SSYTTILVKIRSKEGRRKA. Residues 237-257 traverse the membrane as a helical segment; that stretch reads LSTCASHLMVVTLFFGPCIFI. Residues 258–268 are Extracellular-facing; it reads YARPFSTFSVD. The chain crosses the membrane as a helical span at residues 269–289; the sequence is KMVSVLYNVITPMLNPLIYTL. The Cytoplasmic segment spans residues 290-314; the sequence is RNKEVKSAMQKLWVRNGLTWKKQET.

This sequence belongs to the G-protein coupled receptor 1 family.

It is found in the cell membrane. Functionally, odorant receptor. The polypeptide is Olfactory receptor 4Q2 (OR4Q2) (Homo sapiens (Human)).